A 134-amino-acid chain; its full sequence is Calvin cycle protein CP12-3, chloroplastic (134 aa).

Positions 1–21 (MISGSATASHGRVLLPSQRER) are disordered. Residues 1–42 (MISGSATASHGRVLLPSQRERRPVSTGSNILRFRETVPRQFS) constitute a chloroplast transit peptide. Disulfide bonds link Cys-78/Cys-87 and Cys-120/Cys-129.

It belongs to the CP12 family. In terms of assembly, monomer. Component of a complex that contains two dimers of PRK, two tetramers of GAPDH and CP12. CP12 associates with GAPDH, causing its conformation to change. This GAPDH/CP12 complex binds PRK to form a half-complex (one unit). This unit probably dimerizes due partially to interactions between the enzymes of each unit. Post-translationally, contains two disulfide bonds; only the oxidized protein, with two disulfide bonds, is active in complex formation. The C-terminal disulfide is involved in the interaction with GAPDH and the N-terminal disulfide mediates the binding of PRK with this binary complex. As to expression, mostly expressed, at low levels, in stems and, to a lesser extent, in leaves and roots.

It localises to the plastid. The protein resides in the chloroplast. Acts as a linker essential in the assembly of a core complex of PRK/GAPDH. Coordinates the reversible inactivation of chloroplast enzymes GAPDH and PRK during darkness in photosynthetic tissues. The chain is Calvin cycle protein CP12-3, chloroplastic (CP12-3) from Arabidopsis thaliana (Mouse-ear cress).